Consider the following 371-residue polypeptide: MSTNNSDIRVVVGMSGGVDSSVTAHILKEQGYDVIGIFMKNWDDTDEFGVCTATEDYDDVIRVANQIGIPYYAVNFEKEYWDKVFTYFLDEYKLGRTPNPDVMCNKEIKFKAFLEHAESLGADYVATGHYAQVKKVGDEIELLRGVDNNKDQTYFLNQLSQDQLKKVMFPLGAMEKTEVREIAKKAGLATADKKDSTGICFIGERNFKQFLSEYLPAQPGEMRTLDGEVLGKHDGLMYYTIGQRHGLGIGGDGEPWFVVGKDLKENVLFVEQGFHHETLYSDSLIATDISFTTNAEKPKTIECTAKFRYRQTDTKVTVHLREDGTAEVVFADPVRAITPGQAVVFYDGDVCLGGGTIDTVWKNGQKLDYVG.

Residues 13–20 (GMSGGVDS) and Met-39 contribute to the ATP site. Residues 99–101 (NPD) form an interaction with target base in tRNA region. The active-site Nucleophile is Cys-104. An intrachain disulfide couples Cys-104 to Cys-200. Gly-128 is an ATP binding site. Residues 150-152 (KDQ) form an interaction with tRNA region. Cys-200 (cysteine persulfide intermediate) is an active-site residue. The interval 308 to 309 (RY) is interaction with tRNA.

It belongs to the MnmA/TRMU family.

The protein resides in the cytoplasm. The enzyme catalyses S-sulfanyl-L-cysteinyl-[protein] + uridine(34) in tRNA + AH2 + ATP = 2-thiouridine(34) in tRNA + L-cysteinyl-[protein] + A + AMP + diphosphate + H(+). Functionally, catalyzes the 2-thiolation of uridine at the wobble position (U34) of tRNA, leading to the formation of s(2)U34. The chain is tRNA-specific 2-thiouridylase MnmA from Listeria monocytogenes serovar 1/2a (strain ATCC BAA-679 / EGD-e).